The following is a 154-amino-acid chain: uncharacterized protein (154 aa).

Helical transmembrane passes span 54–74 (FLITNLIFFFAAFVALLIYLL) and 81–101 (FAFVFIAAIIFIIFYNIFFLS).

Its subcellular location is the cell membrane. This is an uncharacterized protein from Mycoplasma genitalium (strain ATCC 33530 / DSM 19775 / NCTC 10195 / G37) (Mycoplasmoides genitalium).